The sequence spans 185 residues: Peptidyl-tRNA hydrolase (185 aa).

Residue Y14 coordinates tRNA. The Proton acceptor role is filled by H19. TRNA contacts are provided by F64, N66, and N112.

This sequence belongs to the PTH family. Monomer.

The protein resides in the cytoplasm. It carries out the reaction an N-acyl-L-alpha-aminoacyl-tRNA + H2O = an N-acyl-L-amino acid + a tRNA + H(+). Functionally, hydrolyzes ribosome-free peptidyl-tRNAs (with 1 or more amino acids incorporated), which drop off the ribosome during protein synthesis, or as a result of ribosome stalling. Catalyzes the release of premature peptidyl moieties from peptidyl-tRNA molecules trapped in stalled 50S ribosomal subunits, and thus maintains levels of free tRNAs and 50S ribosomes. The chain is Peptidyl-tRNA hydrolase from Caldanaerobacter subterraneus subsp. tengcongensis (strain DSM 15242 / JCM 11007 / NBRC 100824 / MB4) (Thermoanaerobacter tengcongensis).